Reading from the N-terminus, the 157-residue chain is SsrA-binding protein (157 aa).

The segment covering 134–151 has biased composition (basic and acidic residues); that stretch reads HDKRETEKKRDWSKEKGR. Positions 134-157 are disordered; the sequence is HDKRETEKKRDWSKEKGRLMRAKG.

Belongs to the SmpB family.

The protein resides in the cytoplasm. Functionally, required for rescue of stalled ribosomes mediated by trans-translation. Binds to transfer-messenger RNA (tmRNA), required for stable association of tmRNA with ribosomes. tmRNA and SmpB together mimic tRNA shape, replacing the anticodon stem-loop with SmpB. tmRNA is encoded by the ssrA gene; the 2 termini fold to resemble tRNA(Ala) and it encodes a 'tag peptide', a short internal open reading frame. During trans-translation Ala-aminoacylated tmRNA acts like a tRNA, entering the A-site of stalled ribosomes, displacing the stalled mRNA. The ribosome then switches to translate the ORF on the tmRNA; the nascent peptide is terminated with the 'tag peptide' encoded by the tmRNA and targeted for degradation. The ribosome is freed to recommence translation, which seems to be the essential function of trans-translation. The polypeptide is SsrA-binding protein (Rhodopseudomonas palustris (strain BisA53)).